The following is a 366-amino-acid chain: Dual-specificity RNA methyltransferase RlmN (366 aa).

Glutamate 102 acts as the Proton acceptor in catalysis. Positions 108-340 (DEGRNTLCVS…TTTRKTRGRD (233 aa)) constitute a Radical SAM core domain. Cysteine 115 and cysteine 345 are disulfide-bonded. Positions 122, 126, and 129 each coordinate [4Fe-4S] cluster. S-adenosyl-L-methionine-binding positions include 171 to 172 (GE), serine 203, 225 to 227 (SLH), and asparagine 302. Catalysis depends on cysteine 345, which acts as the S-methylcysteine intermediate.

Belongs to the radical SAM superfamily. RlmN family. [4Fe-4S] cluster is required as a cofactor.

The protein localises to the cytoplasm. It carries out the reaction adenosine(2503) in 23S rRNA + 2 reduced [2Fe-2S]-[ferredoxin] + 2 S-adenosyl-L-methionine = 2-methyladenosine(2503) in 23S rRNA + 5'-deoxyadenosine + L-methionine + 2 oxidized [2Fe-2S]-[ferredoxin] + S-adenosyl-L-homocysteine. The enzyme catalyses adenosine(37) in tRNA + 2 reduced [2Fe-2S]-[ferredoxin] + 2 S-adenosyl-L-methionine = 2-methyladenosine(37) in tRNA + 5'-deoxyadenosine + L-methionine + 2 oxidized [2Fe-2S]-[ferredoxin] + S-adenosyl-L-homocysteine. Specifically methylates position 2 of adenine 2503 in 23S rRNA and position 2 of adenine 37 in tRNAs. m2A2503 modification seems to play a crucial role in the proofreading step occurring at the peptidyl transferase center and thus would serve to optimize ribosomal fidelity. This Methylococcus capsulatus (strain ATCC 33009 / NCIMB 11132 / Bath) protein is Dual-specificity RNA methyltransferase RlmN.